The following is a 212-amino-acid chain: Ribonuclease HII (212 aa).

The region spanning 20–209 is the RNase H type-2 domain; that stretch reads TCVVGVDEVG…VHNILYQEAS (190 aa). Residues D26, E27, and D117 each contribute to the a divalent metal cation site.

This sequence belongs to the RNase HII family. Requires Mn(2+) as cofactor. It depends on Mg(2+) as a cofactor.

It localises to the cytoplasm. It catalyses the reaction Endonucleolytic cleavage to 5'-phosphomonoester.. In terms of biological role, endonuclease that specifically degrades the RNA of RNA-DNA hybrids. This chain is Ribonuclease HII, found in Cereibacter sphaeroides (strain ATCC 17023 / DSM 158 / JCM 6121 / CCUG 31486 / LMG 2827 / NBRC 12203 / NCIMB 8253 / ATH 2.4.1.) (Rhodobacter sphaeroides).